We begin with the raw amino-acid sequence, 492 residues long: Probable proline dehydrogenase, mitochondrial (492 aa).

The protein belongs to the proline oxidase family. FAD is required as a cofactor.

It is found in the mitochondrion. It catalyses the reaction L-proline + a quinone = (S)-1-pyrroline-5-carboxylate + a quinol + H(+). Its function is as follows. Converts proline to delta-1-pyrroline-5-carboxylate. The sequence is that of Probable proline dehydrogenase, mitochondrial from Schizosaccharomyces pombe (strain 972 / ATCC 24843) (Fission yeast).